The following is a 157-amino-acid chain: Phosphopantetheine adenylyltransferase (157 aa).

Belongs to the eukaryotic CoaD family.

It localises to the cytoplasm. The enzyme catalyses (R)-4'-phosphopantetheine + ATP + H(+) = 3'-dephospho-CoA + diphosphate. It functions in the pathway cofactor biosynthesis; coenzyme A biosynthesis. Reversibly transfers an adenylyl group from ATP to 4'-phosphopantetheine, yielding dephospho-CoA (dPCoA) and pyrophosphate. The sequence is that of Phosphopantetheine adenylyltransferase from Methanopyrus kandleri (strain AV19 / DSM 6324 / JCM 9639 / NBRC 100938).